A 348-amino-acid chain; its full sequence is Glycerol-1-phosphate dehydrogenase [NAD(P)+] (348 aa).

NAD(+) contacts are provided by residues 94–98 (GKVID) and Thr116. Substrate is bound at residue Asp121. NAD(+) is bound at residue Ser125. Residue Asp168 coordinates substrate. Residues Asp168 and His248 each coordinate Zn(2+). His252 serves as a coordination point for substrate. His264 lines the Zn(2+) pocket.

Belongs to the glycerol-1-phosphate dehydrogenase family. Homooctamer. Requires Zn(2+) as cofactor.

Its subcellular location is the cytoplasm. The catalysed reaction is sn-glycerol 1-phosphate + NAD(+) = dihydroxyacetone phosphate + NADH + H(+). It catalyses the reaction sn-glycerol 1-phosphate + NADP(+) = dihydroxyacetone phosphate + NADPH + H(+). It functions in the pathway membrane lipid metabolism; glycerophospholipid metabolism. Catalyzes the NAD(P)H-dependent reduction of dihydroxyacetonephosphate (DHAP or glycerone phosphate) to glycerol 1-phosphate (G1P). The G1P thus generated is used as the glycerophosphate backbone of phospholipids in the cellular membranes of Archaea. The polypeptide is Glycerol-1-phosphate dehydrogenase [NAD(P)+] (Methanosphaera stadtmanae (strain ATCC 43021 / DSM 3091 / JCM 11832 / MCB-3)).